Reading from the N-terminus, the 1240-residue chain is MPVSLAVCETTANVVNAALRESLGSCVARAALSADEAKTSNGGGDGSSTSGSSTDNLQSQIVANAKRVLLAKIDYEEVDNYHESVLAKLKSKYIVIKPDSNGGAASNGNGNYNGSNKTNGKFGAGNGHDNNGNGNGIVNGGTSALNGGNNRKQIVVVDHQSSNQHGSPSNPNELPKPKRVLYQREHIRIGWKQSERKWQVGTGMLNVGNTCYLNSSLQALFHIPSLANWLVSESAHLENCNISESCGSNGCIICAMAKTLQSTQSNQSAVRPFLIYSKLRQICKHMVVGRQEDAHEFLRFLIEAMEKAYLMRFRNYKELDQLVKETTPLNQIFGGYLRSEVRCLSCNHVSITFQHFQDLLLDIRKSDTLEDAFDGYFSRERLEDMGYKCEGCKKKVSATKQFSLERAPITLCIQLKRFSMMGNKLTKQISFKPRIDLSRFAARSPTAAAQPLSYRLVSMVTHLGVSQHCGHYTAIGLTETGSYYNFDDSCVRPIAMQSVCNTNAYIMFYELDVNGNGHVVAPKMNGMRLTTNGGQQHSSPVVATAPAAVVSATATSTSASVSAAAVTSPRFIGPQLPNGYGNSNGHALGGGAAKTAIQFKTTPQKHQQQQQAQTQYQLNGHINGAAKFQTGAANANANKSSCNTLNNSKQHQPQQQQQQPQHILPISSDEEEDSDDDNDNDNVKTNKAPQLPSMPKMFEESSESVALTAKLKPKTALKSLVPYESASEEEEQQQQQQQQTLQQQAATNSRKRRSGADSSDTDDDDDEEQQQQQQQQPSLILRNGHAKTNGNLLNSSSSKTKSASNASSANVNSSKQKTDAIDEIFKSLNNYKNKHRNDHNHVDDDDDDDEDEDEDEDEAQAQAEKKTVTKSSSSSSSTSLTNGWQQSQNGKATASPKTPPSPAVIKTKTGIWQVTRNDEDDDENVDGVADADDDDDNDEVAEPAVVTAKNHKNPFAAGKATATTDANPSAKRQKLLNGSSKSQQTTPRIGNGYQGESLPNGNAVVSELLKQNHRGYGSSVLSWNGKASELDKETFDLVCAKRIAGYGAAAADEHCCDVNSGHSSNYGTNYKSLNNDMSSSSSSSSSTNSSSNSSSRSNGNSSNCPPCDLLAEAREQRKRDDDDEEENEMDRGRQRKIKSASVKCGSGATAAPPGYNPFQEYESQKRWHSNKSGSYSRFYHHPNYRSNFQQRNKFKHNRFAGGGGGAKFQQQRALQRHLASGGGFTRRQHHQSSGQQQQQS.

2 disordered regions span residues 37–56 (AKTS…STDN) and 100–144 (SNGG…GTSA). 2 stretches are compositionally biased toward low complexity: residues 47 to 56 (SSTSGSSTDN) and 101 to 132 (NGGA…DNNG). Residues 202 to 512 (TGMLNVGNTC…NAYIMFYELD (311 aa)) form the USP domain. C211 serves as the catalytic Nucleophile. The active-site Proton acceptor is H471. The disordered stretch occupies residues 637 to 705 (ANKSSCNTLN…KMFEESSESV (69 aa)). Residues 639–649 (KSSCNTLNNSK) show a composition bias toward polar residues. A compositionally biased stretch (low complexity) spans 650 to 662 (QHQPQQQQQQPQH). The span at 668–680 (SDEEEDSDDDNDN) shows a compositional bias: acidic residues. At T715 the chain carries Phosphothreonine. Disordered stretches follow at residues 723 to 818 (YESA…KQKT), 831 to 998 (YKNK…GESL), 1076 to 1163 (DMSS…EYES), and 1198 to 1240 (RFAG…QQQS). Phosphoserine occurs at positions 725 and 727. The span at 733 to 744 (QQQQQQQTLQQQ) shows a compositional bias: low complexity. Acidic residues predominate over residues 759–769 (SDTDDDDDEEQ). Residues 794–815 (NSSSSKTKSASNASSANVNSSK) show a composition bias toward low complexity. A compositionally biased stretch (acidic residues) spans 843-859 (DDDDDDDEDEDEDEDEA). Over residues 869-879 (TKSSSSSSSTS) the composition is skewed to low complexity. Positions 880–890 (LTNGWQQSQNG) are enriched in polar residues. Residue S895 is modified to Phosphoserine. The residue at position 898 (T898) is a Phosphothreonine. The residue at position 901 (S901) is a Phosphoserine. Acidic residues predominate over residues 918 to 941 (DEDDDENVDGVADADDDDDNDEVA). Residues 976 to 988 (LNGSSKSQQTTPR) are compositionally biased toward polar residues. A compositionally biased stretch (low complexity) spans 1076 to 1103 (DMSSSSSSSSSTNSSSNSSSRSNGNSSN). The segment covering 1111–1120 (AEAREQRKRD) has biased composition (basic and acidic residues). Residues 1231–1240 (QSSGQQQQQS) show a composition bias toward low complexity.

It belongs to the peptidase C19 family. In terms of assembly, interacts with atms/PAF1, but not with CycT.

The protein resides in the nucleus. The protein localises to the nucleolus. The enzyme catalyses Thiol-dependent hydrolysis of ester, thioester, amide, peptide and isopeptide bonds formed by the C-terminal Gly of ubiquitin (a 76-residue protein attached to proteins as an intracellular targeting signal).. Its function is as follows. Required for maintaining multiple types of adult stem cells, including male and female germline, epithelial follicle cell and intestinal stem cells. May function as a transcriptional repressor by continually deubiquiting histone H2B at the promoters of genes critical for cellular differentiation, thereby preventing histone H3 'Lys-4' trimethylation (H3K4). Controls selective autophagy activation by ubiquitinated proteins. The protein is Ubiquitin carboxyl-terminal hydrolase 36 (Usp36) of Drosophila grimshawi (Hawaiian fruit fly).